The primary structure comprises 163 residues: UPF0262 protein RPB_4349 (163 aa).

The protein belongs to the UPF0262 family.

The sequence is that of UPF0262 protein RPB_4349 from Rhodopseudomonas palustris (strain HaA2).